The chain runs to 328 residues: Ribosomal RNA large subunit methyltransferase F (328 aa).

Positions 1–31 (MTDTRKPPRKKPQRPAKPAAPREKATLHPRN) are disordered.

The protein belongs to the methyltransferase superfamily. METTL16/RlmF family.

Its subcellular location is the cytoplasm. It catalyses the reaction adenosine(1618) in 23S rRNA + S-adenosyl-L-methionine = N(6)-methyladenosine(1618) in 23S rRNA + S-adenosyl-L-homocysteine + H(+). Functionally, specifically methylates the adenine in position 1618 of 23S rRNA. The protein is Ribosomal RNA large subunit methyltransferase F of Pseudomonas syringae pv. syringae (strain B728a).